A 471-amino-acid polypeptide reads, in one-letter code: V-type ATP synthase beta chain (471 aa).

This sequence belongs to the ATPase alpha/beta chains family.

In terms of biological role, produces ATP from ADP in the presence of a proton gradient across the membrane. The V-type beta chain is a regulatory subunit. The polypeptide is V-type ATP synthase beta chain (Streptococcus pyogenes serotype M18 (strain MGAS8232)).